Reading from the N-terminus, the 112-residue chain is MTQEIYEYANKIERALRNLPEYKKVVAAKEDIEKDSEASNIFEEFFKLQAKLKEMIQNGQTPSNEEQETIHQLSSKIESNELLKAYFEAQQSLSVYINDIERIIFNPLKDLI.

It belongs to the UPF0342 family.

This is UPF0342 protein SUB0718 from Streptococcus uberis (strain ATCC BAA-854 / 0140J).